The primary structure comprises 251 residues: Fibroblast growth factor-binding protein 1 (251 aa).

Residues methionine 1–serine 20 form the signal peptide. The disordered stretch occupies residues lysine 25–threonine 62. Disulfide bonds link cysteine 74–cysteine 91, cysteine 100–cysteine 133, and cysteine 109–cysteine 145. The tract at residues asparagine 160–glutamate 189 is disordered. Residues glutamate 170–valine 182 are compositionally biased toward basic and acidic residues. Residue serine 175 is glycosylated (O-linked (GalNAc...) serine). Residues arginine 210–cysteine 251 form a sufficient for interaction with FGF2 and FGF2-induced effects region. 2 cysteine pairs are disulfide-bonded: cysteine 214–cysteine 251 and cysteine 231–cysteine 239.

It belongs to the fibroblast growth factor-binding protein family. As to quaternary structure, found in a complex with FGFBP1, FGF1 and FGF2. Interacts with FGF1, FGF7, FGF10, FGF22 and HSPG2. Interacts with FGF2. In terms of tissue distribution, expressed in intestine, ovary, lung, placenta and normal and wounded skin.

The protein resides in the secreted. It localises to the extracellular space. Its subcellular location is the cell membrane. In terms of biological role, acts as a carrier protein that releases fibroblast-binding factors (FGFs) from the extracellular matrix (EM) storage and thus enhances the mitogenic activity of FGFs. Enhances FGF2 signaling during tissue repair, angiogenesis and in tumor growth. The polypeptide is Fibroblast growth factor-binding protein 1 (Fgfbp1) (Mus musculus (Mouse)).